We begin with the raw amino-acid sequence, 437 residues long: GTPase Obg (437 aa).

The Obg domain maps to 2 to 160 (SMFLDTAKVS…RQLELELKIL (159 aa)). The OBG-type G domain maps to 161-338 (ADVGLVGFPS…LLEATAELLA (178 aa)). Residues 167 to 174 (GFPSVGKS), 192 to 196 (FTTIV), 214 to 217 (DLPG), 284 to 287 (NKMD), and 319 to 321 (SSL) each bind GTP. The Mg(2+) site is built by serine 174 and threonine 194. The 79-residue stretch at 359-437 (GFAAEEKAFE…IGKFEFEFVD (79 aa)) folds into the OCT domain.

Belongs to the TRAFAC class OBG-HflX-like GTPase superfamily. OBG GTPase family. Monomer. It depends on Mg(2+) as a cofactor.

It localises to the cytoplasm. Its function is as follows. An essential GTPase which binds GTP, GDP and possibly (p)ppGpp with moderate affinity, with high nucleotide exchange rates and a fairly low GTP hydrolysis rate. Plays a role in control of the cell cycle, stress response, ribosome biogenesis and in those bacteria that undergo differentiation, in morphogenesis control. The protein is GTPase Obg of Streptococcus equi subsp. equi (strain 4047).